A 442-amino-acid polypeptide reads, in one-letter code: tRNA-2-methylthio-N(6)-dimethylallyladenosine synthase (442 aa).

An MTTase N-terminal domain is found at 2 to 120 (KKVFIRTFGC…LPKMIVDKET (119 aa)). [4Fe-4S] cluster is bound by residues cysteine 11, cysteine 49, cysteine 83, cysteine 157, cysteine 161, and cysteine 164. The Radical SAM core domain occupies 143–375 (RVEGGAAFVS…NEVIEAETAR (233 aa)). Residues 378-441 (QTMIGTVQRC…TFSLRGKIVE (64 aa)) form the TRAM domain.

The protein belongs to the methylthiotransferase family. MiaB subfamily. Monomer. [4Fe-4S] cluster serves as cofactor.

It is found in the cytoplasm. The catalysed reaction is N(6)-dimethylallyladenosine(37) in tRNA + (sulfur carrier)-SH + AH2 + 2 S-adenosyl-L-methionine = 2-methylsulfanyl-N(6)-dimethylallyladenosine(37) in tRNA + (sulfur carrier)-H + 5'-deoxyadenosine + L-methionine + A + S-adenosyl-L-homocysteine + 2 H(+). Its function is as follows. Catalyzes the methylthiolation of N6-(dimethylallyl)adenosine (i(6)A), leading to the formation of 2-methylthio-N6-(dimethylallyl)adenosine (ms(2)i(6)A) at position 37 in tRNAs that read codons beginning with uridine. The chain is tRNA-2-methylthio-N(6)-dimethylallyladenosine synthase from Neisseria gonorrhoeae (strain ATCC 700825 / FA 1090).